Here is a 361-residue protein sequence, read N- to C-terminus: Phospho-N-acetylmuramoyl-pentapeptide-transferase (361 aa).

Helical transmembrane passes span 28 to 48 (LAIIITLSLSFITGPILIKFL), 74 to 94 (TMGGIMIILSSCLSTLLLADL), 99 to 119 (IWITLFGFISFGIIGFMDDYA), 133 to 153 (SKLLLQGIISLIICILLEYLD), 168 to 188 (LSLDLGYFYIVFAIFVIVGSS), 203 to 223 (VPIAFTAGSFALISYLVGNLI), 236 to 256 (TGELTVLCAGLVGSCLGFLWF), 263 to 283 (VFMGDTGSLSLGGVLGIISVI), 288 to 308 (IVLAIVGGLFVIETASVILQV), and 338 to 358 (KVVIRFWIISVIFALIGLSSL).

Belongs to the glycosyltransferase 4 family. MraY subfamily. It depends on Mg(2+) as a cofactor.

Its subcellular location is the cell inner membrane. The enzyme catalyses UDP-N-acetyl-alpha-D-muramoyl-L-alanyl-gamma-D-glutamyl-meso-2,6-diaminopimeloyl-D-alanyl-D-alanine + di-trans,octa-cis-undecaprenyl phosphate = di-trans,octa-cis-undecaprenyl diphospho-N-acetyl-alpha-D-muramoyl-L-alanyl-D-glutamyl-meso-2,6-diaminopimeloyl-D-alanyl-D-alanine + UMP. Its pathway is cell wall biogenesis; peptidoglycan biosynthesis. In terms of biological role, catalyzes the initial step of the lipid cycle reactions in the biosynthesis of the cell wall peptidoglycan: transfers peptidoglycan precursor phospho-MurNAc-pentapeptide from UDP-MurNAc-pentapeptide onto the lipid carrier undecaprenyl phosphate, yielding undecaprenyl-pyrophosphoryl-MurNAc-pentapeptide, known as lipid I. The sequence is that of Phospho-N-acetylmuramoyl-pentapeptide-transferase from Rickettsia felis (strain ATCC VR-1525 / URRWXCal2) (Rickettsia azadi).